The sequence spans 253 residues: Hydroxyacylglutathione hydrolase (253 aa).

Residues His-59, His-61, Asp-63, His-64, His-118, Asp-143, and His-181 each contribute to the Zn(2+) site.

The protein belongs to the metallo-beta-lactamase superfamily. Glyoxalase II family. In terms of assembly, monomer. The cofactor is Zn(2+).

The catalysed reaction is an S-(2-hydroxyacyl)glutathione + H2O = a 2-hydroxy carboxylate + glutathione + H(+). The protein operates within secondary metabolite metabolism; methylglyoxal degradation; (R)-lactate from methylglyoxal: step 2/2. In terms of biological role, thiolesterase that catalyzes the hydrolysis of S-D-lactoyl-glutathione to form glutathione and D-lactic acid. In Prochlorococcus marinus (strain MIT 9211), this protein is Hydroxyacylglutathione hydrolase.